Reading from the N-terminus, the 189-residue chain is Probable nicotinate-nucleotide adenylyltransferase (189 aa).

Belongs to the NadD family.

It carries out the reaction nicotinate beta-D-ribonucleotide + ATP + H(+) = deamido-NAD(+) + diphosphate. Its pathway is cofactor biosynthesis; NAD(+) biosynthesis; deamido-NAD(+) from nicotinate D-ribonucleotide: step 1/1. Functionally, catalyzes the reversible adenylation of nicotinate mononucleotide (NaMN) to nicotinic acid adenine dinucleotide (NaAD). This chain is Probable nicotinate-nucleotide adenylyltransferase, found in Bacillus cereus (strain G9842).